We begin with the raw amino-acid sequence, 279 residues long: Pantothenate synthetase (279 aa).

Residue Met-26–His-33 participates in ATP binding. The active-site Proton donor is His-33. Gln-57 provides a ligand contact to (R)-pantoate. Gln-57 contacts beta-alanine. Gly-144–Asp-147 is an ATP binding site. Gln-150 lines the (R)-pantoate pocket. Residues Val-173 and Leu-181–Arg-184 each bind ATP.

Belongs to the pantothenate synthetase family. In terms of assembly, homodimer.

Its subcellular location is the cytoplasm. The enzyme catalyses (R)-pantoate + beta-alanine + ATP = (R)-pantothenate + AMP + diphosphate + H(+). It participates in cofactor biosynthesis; (R)-pantothenate biosynthesis; (R)-pantothenate from (R)-pantoate and beta-alanine: step 1/1. In terms of biological role, catalyzes the condensation of pantoate with beta-alanine in an ATP-dependent reaction via a pantoyl-adenylate intermediate. This Burkholderia cenocepacia (strain HI2424) protein is Pantothenate synthetase.